The following is a 208-amino-acid chain: MDDVTKALNLVPMVVEQTSRGERAYDIYSRLLKERLIFLVGPIDDYMANLIVAQLLFLEAENPEKDINIYINSPGGVVTAGMAIYDTMQYIKPAVSTICVGQAASMGALLLASGASGKRYALPNSRVMIHQPLGGFQGQATDVDIHAREILALRARLNEILAKHTGQSLETIAHDTERDNFKSAVDAQAYGLVDQVFGQRQEELIQSS.

Catalysis depends on serine 105, which acts as the Nucleophile. The active site involves histidine 130.

This sequence belongs to the peptidase S14 family. In terms of assembly, fourteen ClpP subunits assemble into 2 heptameric rings which stack back to back to give a disk-like structure with a central cavity, resembling the structure of eukaryotic proteasomes.

Its subcellular location is the cytoplasm. It catalyses the reaction Hydrolysis of proteins to small peptides in the presence of ATP and magnesium. alpha-casein is the usual test substrate. In the absence of ATP, only oligopeptides shorter than five residues are hydrolyzed (such as succinyl-Leu-Tyr-|-NHMec, and Leu-Tyr-Leu-|-Tyr-Trp, in which cleavage of the -Tyr-|-Leu- and -Tyr-|-Trp bonds also occurs).. Functionally, cleaves peptides in various proteins in a process that requires ATP hydrolysis. Has a chymotrypsin-like activity. Plays a major role in the degradation of misfolded proteins. This Xylella fastidiosa (strain M12) protein is ATP-dependent Clp protease proteolytic subunit.